The sequence spans 410 residues: Peptidase T (410 aa).

Residue His-77 participates in Zn(2+) binding. The active site involves Asp-79. Asp-140 serves as a coordination point for Zn(2+). Glu-174 functions as the Proton acceptor in the catalytic mechanism. Zn(2+)-binding residues include Glu-175, Asp-197, and His-379.

It belongs to the peptidase M20B family. The cofactor is Zn(2+).

It is found in the cytoplasm. The catalysed reaction is Release of the N-terminal residue from a tripeptide.. In terms of biological role, cleaves the N-terminal amino acid of tripeptides. This Desulfitobacterium hafniense (strain Y51) protein is Peptidase T.